The primary structure comprises 206 residues: Recombination protein RecR (206 aa).

The C4-type zinc-finger motif lies at 58–73; the sequence is CENCHNISDVAVCEIC. A Toprim domain is found at 81–176; it reads QIVCVVEDVR…ITSSIARGIS (96 aa).

The protein belongs to the RecR family.

May play a role in DNA repair. It seems to be involved in an RecBC-independent recombinational process of DNA repair. It may act with RecF and RecO. This is Recombination protein RecR from Flavobacterium psychrophilum (strain ATCC 49511 / DSM 21280 / CIP 103535 / JIP02/86).